The chain runs to 84 residues: UPF0473 protein CKL_1327 (84 aa).

Belongs to the UPF0473 family.

This chain is UPF0473 protein CKL_1327, found in Clostridium kluyveri (strain ATCC 8527 / DSM 555 / NBRC 12016 / NCIMB 10680 / K1).